A 289-amino-acid polypeptide reads, in one-letter code: Protease HtpX (289 aa).

A run of 2 helical transmembrane segments spans residues 5–25 (IVLFAITNLAVLILASIVMSL) and 33–53 (MSGLLVMALILGFGGSLISLL). His140 provides a ligand contact to Zn(2+). The active site involves Glu141. Position 144 (His144) interacts with Zn(2+). The next 2 helical transmembrane spans lie at 155–175 (LLQGVLNTFVIVLARVVGGFI) and 193–213 (GIVLVLELLFGLFATIITMWF). Position 218 (Glu218) interacts with Zn(2+).

Belongs to the peptidase M48B family. The cofactor is Zn(2+).

It is found in the cell inner membrane. This chain is Protease HtpX, found in Xylella fastidiosa (strain M12).